The following is a 510-amino-acid chain: 2,3-bisphosphoglycerate-independent phosphoglycerate mutase (510 aa).

Aspartate 12 is a binding site for Mn(2+). Tyrosine 36 carries the phosphotyrosine modification. Serine 62 lines the Mn(2+) pocket. The active-site Phosphoserine intermediate is the serine 62. Residues histidine 123, 153–154 (RD), arginine 185, arginine 191, 261–264 (RPDR), and lysine 336 each bind substrate. Aspartate 403, histidine 407, aspartate 444, histidine 445, and histidine 462 together coordinate Mn(2+).

This sequence belongs to the BPG-independent phosphoglycerate mutase family. Monomer. Mn(2+) serves as cofactor.

It catalyses the reaction (2R)-2-phosphoglycerate = (2R)-3-phosphoglycerate. Its pathway is carbohydrate degradation; glycolysis; pyruvate from D-glyceraldehyde 3-phosphate: step 3/5. Functionally, essential for rapid growth and for sporulation. Catalyzes the interconversion of 2-phosphoglycerate and 3-phosphoglycerate. This chain is 2,3-bisphosphoglycerate-independent phosphoglycerate mutase, found in Shouchella clausii (strain KSM-K16) (Alkalihalobacillus clausii).